A 372-amino-acid polypeptide reads, in one-letter code: ATP phosphoribosyltransferase regulatory subunit (372 aa).

Belongs to the class-II aminoacyl-tRNA synthetase family. HisZ subfamily. In terms of assembly, heteromultimer composed of HisG and HisZ subunits.

Its subcellular location is the cytoplasm. It participates in amino-acid biosynthesis; L-histidine biosynthesis; L-histidine from 5-phospho-alpha-D-ribose 1-diphosphate: step 1/9. In terms of biological role, required for the first step of histidine biosynthesis. May allow the feedback regulation of ATP phosphoribosyltransferase activity by histidine. In Rhizobium rhizogenes (strain K84 / ATCC BAA-868) (Agrobacterium radiobacter), this protein is ATP phosphoribosyltransferase regulatory subunit.